The following is a 309-amino-acid chain: Homoserine kinase (309 aa).

91 to 101 provides a ligand contact to ATP; it reads PLARGLGSSAA.

Belongs to the GHMP kinase family. Homoserine kinase subfamily.

Its subcellular location is the cytoplasm. The catalysed reaction is L-homoserine + ATP = O-phospho-L-homoserine + ADP + H(+). It functions in the pathway amino-acid biosynthesis; L-threonine biosynthesis; L-threonine from L-aspartate: step 4/5. Its function is as follows. Catalyzes the ATP-dependent phosphorylation of L-homoserine to L-homoserine phosphate. This Bacillus velezensis (strain DSM 23117 / BGSC 10A6 / LMG 26770 / FZB42) (Bacillus amyloliquefaciens subsp. plantarum) protein is Homoserine kinase.